A 170-amino-acid chain; its full sequence is ATP synthase subunit b (170 aa).

Residues 30–50 form a helical membrane-spanning segment; sequence FFFVLAIFLVVLAVIGTFVVP.

Belongs to the ATPase B chain family. As to quaternary structure, F-type ATPases have 2 components, F(1) - the catalytic core - and F(0) - the membrane proton channel. F(1) has five subunits: alpha(3), beta(3), gamma(1), delta(1), epsilon(1). F(0) has three main subunits: a(1), b(2) and c(10-14). The alpha and beta chains form an alternating ring which encloses part of the gamma chain. F(1) is attached to F(0) by a central stalk formed by the gamma and epsilon chains, while a peripheral stalk is formed by the delta and b chains.

It is found in the cell membrane. Its function is as follows. F(1)F(0) ATP synthase produces ATP from ADP in the presence of a proton or sodium gradient. F-type ATPases consist of two structural domains, F(1) containing the extramembraneous catalytic core and F(0) containing the membrane proton channel, linked together by a central stalk and a peripheral stalk. During catalysis, ATP synthesis in the catalytic domain of F(1) is coupled via a rotary mechanism of the central stalk subunits to proton translocation. Component of the F(0) channel, it forms part of the peripheral stalk, linking F(1) to F(0). The chain is ATP synthase subunit b from Mycobacterium ulcerans (strain Agy99).